The sequence spans 225 residues: Cytidylate kinase (225 aa).

12 to 20 (GPSGAGKGT) is an ATP binding site.

This sequence belongs to the cytidylate kinase family. Type 1 subfamily.

The protein localises to the cytoplasm. The enzyme catalyses CMP + ATP = CDP + ADP. It catalyses the reaction dCMP + ATP = dCDP + ADP. This is Cytidylate kinase from Pectobacterium atrosepticum (strain SCRI 1043 / ATCC BAA-672) (Erwinia carotovora subsp. atroseptica).